The sequence spans 1055 residues: Vacuolar protein sorting-associated protein 54 (1055 aa).

Residues 363-383 are a coiled coil; sequence TKKIIEVHQKYEQKKHLLAKL. Residues 774–794 are disordered; the sequence is IDDGPTKKPFKRTGSSATIDS.

Belongs to the VPS54 family. Component of the Golgi-associated retrograde protein (GARP) complex, also called VFT (VPS fifty-three) complex, composed of VPS51, VPS52, VPS53 and VPS54.

Its subcellular location is the golgi apparatus. It is found in the trans-Golgi network. Its function is as follows. Acts as a component of the GARP complex that is involved in retrograde transport from early and late endosomes to the trans-Golgi network (TGN). The GARP complex facilitates tethering as well as SNARE complex assembly at the Golgi. The sequence is that of Vacuolar protein sorting-associated protein 54 (vps-54) from Caenorhabditis briggsae.